The primary structure comprises 105 residues: Met repressor (105 aa).

It belongs to the MetJ family. Homodimer.

It localises to the cytoplasm. Functionally, this regulatory protein, when combined with SAM (S-adenosylmethionine) represses the expression of the methionine regulon and of enzymes involved in SAM synthesis. This Vibrio cholerae serotype O1 (strain ATCC 39541 / Classical Ogawa 395 / O395) protein is Met repressor.